A 436-amino-acid polypeptide reads, in one-letter code: Prenyltransferase nscD (436 aa).

The protein belongs to the tryptophan dimethylallyltransferase family.

The protein operates within secondary metabolite biosynthesis. Its function is as follows. Prenyltransferase; part of the gene cluster that mediates the biosynthesis of neosartoricin B, a prenylated anthracenone that probably exhibits T-cell antiproliferative activity, suggestive of a physiological role as an immunosuppressive agent. The non-reducing polyketide synthase nscA probably synthesizes and cyclizes the decaketide backbone. The hydrolase nscB then mediates the product release through hydrolysis followed by spontaneous decarboxylation. The prenyltransferase nscD catalyzes the addition of the dimethylallyl group to the aromatic C5. The FAD-dependent monooxygenase nscC is then responsible for the stereospecific hydroxylation at C2. Neosartoricin B can be converted into two additional compounds neosartoricins C and D. Neosartoricin C is a spirocyclic compound that is cyclized through the attack of C3 hydroxyl on C14, followed by dehydration. On the other hand, neosartoricin D is a further cyclized compound in which attack of C2 on C14 in neosartoricin C results in the formation of the acetal-containing dioxabicyclo-octanone ring. Both of these compounds are novel and possibly represent related metabolites of the gene cluster. The polypeptide is Prenyltransferase nscD (Trichophyton tonsurans (strain CBS 112818) (Scalp ringworm fungus)).